The chain runs to 276 residues: Biotin synthase (276 aa).

Positions 1-226 (MKKIYLCAIS…EAIIMLAGGR (226 aa)) constitute a Radical SAM core domain. Residues cysteine 17, cysteine 21, and cysteine 24 each contribute to the [4Fe-4S] cluster site. [2Fe-2S] cluster contacts are provided by cysteine 61, cysteine 95, and cysteine 153.

The protein belongs to the radical SAM superfamily. Biotin synthase family. As to quaternary structure, homodimer. [4Fe-4S] cluster is required as a cofactor. [2Fe-2S] cluster serves as cofactor.

The catalysed reaction is (4R,5S)-dethiobiotin + (sulfur carrier)-SH + 2 reduced [2Fe-2S]-[ferredoxin] + 2 S-adenosyl-L-methionine = (sulfur carrier)-H + biotin + 2 5'-deoxyadenosine + 2 L-methionine + 2 oxidized [2Fe-2S]-[ferredoxin]. The protein operates within cofactor biosynthesis; biotin biosynthesis; biotin from 7,8-diaminononanoate: step 2/2. Catalyzes the conversion of dethiobiotin (DTB) to biotin by the insertion of a sulfur atom into dethiobiotin via a radical-based mechanism. The sequence is that of Biotin synthase from Nautilia profundicola (strain ATCC BAA-1463 / DSM 18972 / AmH).